Consider the following 293-residue polypeptide: Probable rRNA-processing protein EBP2 homolog (293 aa).

The span at 1–37 (MSLEEDIVSDDEMNMIDEDDATDSEAESLSDSDTENE) shows a compositional bias: acidic residues. 2 disordered regions span residues 1 to 45 (MSLE…LAEP) and 150 to 293 (IEES…RQKR). Positions 135 to 190 (HMEKVKSRLLHEKKQIEESEERRKARDNKRMAKEVQSQKMKERAKEKKDNIESVKK) form a coiled coil. 3 stretches are compositionally biased toward basic and acidic residues: residues 150-167 (IEES…RMAK), 173-189 (KMKE…ESVK), and 247-256 (KKREFRDSKF). A compositionally biased stretch (polar residues) spans 265–275 (SKQNTAETTND).

The protein belongs to the EBP2 family. Interacts with NSN1.

The protein localises to the nucleus. It localises to the nucleolus. Functionally, required for the processing of the 27S pre-rRNA. Plays an important role in plant growth and senescence by modulating ribosome biogenesis in nucleolus. Associates with ribosomes. This is Probable rRNA-processing protein EBP2 homolog from Arabidopsis thaliana (Mouse-ear cress).